The following is a 362-amino-acid chain: Isopentenyl-diphosphate delta-isomerase (362 aa).

Residue 5-6 (RK) participates in substrate binding. FMN contacts are provided by residues 63–65 (AMT), Ser-93, and Asn-122. Gln-152 provides a ligand contact to substrate. Position 153 (Glu-153) interacts with Mg(2+). Residues Lys-184, Thr-214, 259–261 (GIR), and 280–281 (AG) contribute to the FMN site.

The protein belongs to the IPP isomerase type 2 family. As to quaternary structure, homooctamer. Dimer of tetramers. Requires FMN as cofactor. NADPH serves as cofactor. Mg(2+) is required as a cofactor.

The protein localises to the cytoplasm. It carries out the reaction isopentenyl diphosphate = dimethylallyl diphosphate. Its function is as follows. Involved in the biosynthesis of isoprenoids. Catalyzes the 1,3-allylic rearrangement of the homoallylic substrate isopentenyl (IPP) to its allylic isomer, dimethylallyl diphosphate (DMAPP). This chain is Isopentenyl-diphosphate delta-isomerase, found in Nocardia farcinica (strain IFM 10152).